The primary structure comprises 493 residues: Glutamate--tRNA ligase (493 aa).

Positions 10 to 20 (PSPTGDPHVGT) match the 'HIGH' region motif. Cysteine 107, cysteine 109, cysteine 134, and histidine 136 together coordinate Zn(2+). Residues 251 to 255 (KLSKR) carry the 'KMSKS' region motif. Lysine 254 contacts ATP.

Belongs to the class-I aminoacyl-tRNA synthetase family. Glutamate--tRNA ligase type 1 subfamily. Monomer. Requires Zn(2+) as cofactor.

The protein resides in the cytoplasm. The catalysed reaction is tRNA(Glu) + L-glutamate + ATP = L-glutamyl-tRNA(Glu) + AMP + diphosphate. Its function is as follows. Catalyzes the attachment of glutamate to tRNA(Glu) in a two-step reaction: glutamate is first activated by ATP to form Glu-AMP and then transferred to the acceptor end of tRNA(Glu). The chain is Glutamate--tRNA ligase from Stutzerimonas stutzeri (strain A1501) (Pseudomonas stutzeri).